Consider the following 83-residue polypeptide: Beta-defensin 19 (83 aa).

The N-terminal stretch at 1–19 (MRLALLLLAILVATELVVS) is a signal peptide. 3 cysteine pairs are disulfide-bonded: C27-C54, C34-C48, and C38-C55.

The protein belongs to the beta-defensin family. In terms of tissue distribution, specifically expressed in male gonads (Sertoli cells).

Its subcellular location is the secreted. Its function is as follows. Has antibacterial activity. The sequence is that of Beta-defensin 19 (Defb19) from Mus musculus (Mouse).